The following is a 54-amino-acid chain: Lectin alpha chain (54 aa).

The protein belongs to the leguminous lectin family. In terms of assembly, tetramer of two alpha and two beta chains.

This is Lectin alpha chain from Lathyrus tingitanus (Tangier pea).